The chain runs to 140 residues: uncharacterized protein (140 aa).

The HTH cro/C1-type domain occupies 26 to 80; it reads IRSQRETAHVSMRQLAERSGVSNPYLSQVERGLRKPSADVLSQIAKALRVSAEVL. Positions 37–56 form a DNA-binding region, H-T-H motif; that stretch reads MRQLAERSGVSNPYLSQVER.

This is an uncharacterized protein from Mycobacterium tuberculosis (strain ATCC 25618 / H37Rv).